The chain runs to 157 residues: Peptide methionine sulfoxide reductase MsrA (157 aa).

Residue C10 is part of the active site.

The protein belongs to the MsrA Met sulfoxide reductase family.

It carries out the reaction L-methionyl-[protein] + [thioredoxin]-disulfide + H2O = L-methionyl-(S)-S-oxide-[protein] + [thioredoxin]-dithiol. It catalyses the reaction [thioredoxin]-disulfide + L-methionine + H2O = L-methionine (S)-S-oxide + [thioredoxin]-dithiol. Its function is as follows. Has an important function as a repair enzyme for proteins that have been inactivated by oxidation. Catalyzes the reversible oxidation-reduction of methionine sulfoxide in proteins to methionine. This Clostridium perfringens (strain 13 / Type A) protein is Peptide methionine sulfoxide reductase MsrA.